Consider the following 261-residue polypeptide: Adenosylcobinamide-GDP ribazoletransferase (261 aa).

Helical transmembrane passes span Gly4–Trp26, Leu40–Leu60, Pro62–Leu82, Val110–Met130, Phe140–Ile160, Cys197–Phe217, and Ile237–Leu257.

This sequence belongs to the CobS family. The cofactor is Mg(2+).

The protein localises to the cell membrane. It catalyses the reaction alpha-ribazole + adenosylcob(III)inamide-GDP = adenosylcob(III)alamin + GMP + H(+). The enzyme catalyses alpha-ribazole 5'-phosphate + adenosylcob(III)inamide-GDP = adenosylcob(III)alamin 5'-phosphate + GMP + H(+). Its pathway is cofactor biosynthesis; adenosylcobalamin biosynthesis; adenosylcobalamin from cob(II)yrinate a,c-diamide: step 7/7. In terms of biological role, joins adenosylcobinamide-GDP and alpha-ribazole to generate adenosylcobalamin (Ado-cobalamin). Also synthesizes adenosylcobalamin 5'-phosphate from adenosylcobinamide-GDP and alpha-ribazole 5'-phosphate. This Halalkalibacterium halodurans (strain ATCC BAA-125 / DSM 18197 / FERM 7344 / JCM 9153 / C-125) (Bacillus halodurans) protein is Adenosylcobinamide-GDP ribazoletransferase.